The sequence spans 518 residues: UNC5C-like protein (518 aa).

At 1–10 the chain is on the extracellular side; the sequence is MSPQESSVQP. A helical; Signal-anchor for type III membrane protein transmembrane segment spans residues 11–31; sequence SQFLLLVGIPVASALLLAQCL. Residues 32–518 are Cytoplasmic-facing; sequence RWHCCQWLPG…NHGLELDEKL (487 aa). The ZU5 domain occupies 102–237; the sequence is VFSAREVDHR…FSLYTCVLEA (136 aa). Residues 186–400 form an interaction with RELA and NFKB1 region; sequence QQPSQACAYS…ETWAVPPPVS (215 aa). A peptidase S68 region spans residues 208 to 235; sequence PLGQPGTHISRDECRILLSHFSLYTCVL. Active-site residues include His-227 and Ser-229. The 80-residue stretch at 415-494 folds into the Death domain; it reads QLQMLLEPNS…SAIQNYLNRS (80 aa).

This sequence belongs to the unc-5 family. In terms of assembly, interacts with p65/RELA and NFKB1.

It localises to the membrane. The protein resides in the cytoplasm. Its function is as follows. Inhibits NF-kappa-B-dependent transcription by impairing NF-kappa-B binding to its targets. The sequence is that of UNC5C-like protein (Unc5cl) from Mus musculus (Mouse).